A 955-amino-acid chain; its full sequence is Isoleucine--tRNA ligase (955 aa).

The 'HIGH' region signature appears at 60-70; the sequence is PYANGDLHIGH. An L-isoleucyl-5'-AMP-binding site is contributed by Glu563. Residues 604–608 carry the 'KMSKS' region motif; that stretch reads KMSKS. Residue Lys607 coordinates ATP. Residues Cys926, Cys929, Cys946, and Cys949 each contribute to the Zn(2+) site.

This sequence belongs to the class-I aminoacyl-tRNA synthetase family. IleS type 1 subfamily. Monomer. It depends on Zn(2+) as a cofactor.

It localises to the cytoplasm. The enzyme catalyses tRNA(Ile) + L-isoleucine + ATP = L-isoleucyl-tRNA(Ile) + AMP + diphosphate. Its function is as follows. Catalyzes the attachment of isoleucine to tRNA(Ile). As IleRS can inadvertently accommodate and process structurally similar amino acids such as valine, to avoid such errors it has two additional distinct tRNA(Ile)-dependent editing activities. One activity is designated as 'pretransfer' editing and involves the hydrolysis of activated Val-AMP. The other activity is designated 'posttransfer' editing and involves deacylation of mischarged Val-tRNA(Ile). The protein is Isoleucine--tRNA ligase of Cyanothece sp. (strain PCC 7425 / ATCC 29141).